An 863-amino-acid chain; its full sequence is Glycogen phosphorylase (863 aa).

N6-(pyridoxal phosphate)lysine is present on lysine 618.

It belongs to the glycogen phosphorylase family. Pyridoxal 5'-phosphate serves as cofactor.

It carries out the reaction [(1-&gt;4)-alpha-D-glucosyl](n) + phosphate = [(1-&gt;4)-alpha-D-glucosyl](n-1) + alpha-D-glucose 1-phosphate. Functionally, phosphorylase is an important allosteric enzyme in carbohydrate metabolism. Enzymes from different sources differ in their regulatory mechanisms and in their natural substrates. However, all known phosphorylases share catalytic and structural properties. The sequence is that of Glycogen phosphorylase (glgP) from Mycobacterium bovis (strain ATCC BAA-935 / AF2122/97).